The sequence spans 175 residues: Nudix hydrolase 25 (175 aa).

The Nudix hydrolase domain occupies 7–155 (GYRPNVGVCL…KRPTYEEVIK (149 aa)). Mn(2+) contacts are provided by glycine 40, glutamate 55, and glutamate 59. The short motif at 40-61 (GGIEDGEDPKSAAMRELQEETG) is the Nudix box element.

This sequence belongs to the Nudix hydrolase family. Mn(2+) is required as a cofactor.

It catalyses the reaction P(1),P(4)-bis(5'-guanosyl) tetraphosphate + H2O = GMP + GTP + 2 H(+). In terms of biological role, mediates the hydrolysis of diadenosine 5',5''-P(1)P(4) tetraphosphate (Ap(4)A), a signaling molecule involved in regulation of DNA replication and repair. In Arabidopsis thaliana (Mouse-ear cress), this protein is Nudix hydrolase 25.